We begin with the raw amino-acid sequence, 276 residues long: Diaminopimelate epimerase (276 aa).

Substrate contacts are provided by N13, Q46, and N66. The Proton donor role is filled by C75. Substrate is bound by residues 76-77, N159, N192, and 210-211; these read GN and ER. Catalysis depends on C219, which acts as the Proton acceptor. 220–221 is a substrate binding site; it reads GS.

It belongs to the diaminopimelate epimerase family. As to quaternary structure, homodimer.

The protein resides in the cytoplasm. The enzyme catalyses (2S,6S)-2,6-diaminopimelate = meso-2,6-diaminopimelate. It participates in amino-acid biosynthesis; L-lysine biosynthesis via DAP pathway; DL-2,6-diaminopimelate from LL-2,6-diaminopimelate: step 1/1. Catalyzes the stereoinversion of LL-2,6-diaminopimelate (L,L-DAP) to meso-diaminopimelate (meso-DAP), a precursor of L-lysine and an essential component of the bacterial peptidoglycan. This Colwellia psychrerythraea (strain 34H / ATCC BAA-681) (Vibrio psychroerythus) protein is Diaminopimelate epimerase.